A 342-amino-acid chain; its full sequence is Phospho-N-acetylmuramoyl-pentapeptide-transferase (342 aa).

10 helical membrane-spanning segments follow: residues 8–28, 58–78, 86–106, 116–136, 152–172, 184–204, 213–233, 242–262, 267–287, and 318–338; these read VAQP…VIAP, GIPS…TAIF, IWVI…DDYL, ISLE…LIFL, GLID…VGSS, LATL…HLSL, VVGA…LSFL, VFMG…MSVM, FIYA…MAQV, and IVTR…AAII.

This sequence belongs to the glycosyltransferase 4 family. MraY subfamily. Requires Mg(2+) as cofactor.

The protein resides in the cell inner membrane. It catalyses the reaction UDP-N-acetyl-alpha-D-muramoyl-L-alanyl-gamma-D-glutamyl-meso-2,6-diaminopimeloyl-D-alanyl-D-alanine + di-trans,octa-cis-undecaprenyl phosphate = di-trans,octa-cis-undecaprenyl diphospho-N-acetyl-alpha-D-muramoyl-L-alanyl-D-glutamyl-meso-2,6-diaminopimeloyl-D-alanyl-D-alanine + UMP. The protein operates within cell wall biogenesis; peptidoglycan biosynthesis. Catalyzes the initial step of the lipid cycle reactions in the biosynthesis of the cell wall peptidoglycan: transfers peptidoglycan precursor phospho-MurNAc-pentapeptide from UDP-MurNAc-pentapeptide onto the lipid carrier undecaprenyl phosphate, yielding undecaprenyl-pyrophosphoryl-MurNAc-pentapeptide, known as lipid I. This is Phospho-N-acetylmuramoyl-pentapeptide-transferase from Anaplasma marginale (strain Florida).